Reading from the N-terminus, the 332-residue chain is Inositol 2-dehydrogenase 2 (332 aa).

It belongs to the Gfo/Idh/MocA family. As to quaternary structure, homotetramer.

The enzyme catalyses myo-inositol + NAD(+) = scyllo-inosose + NADH + H(+). Involved in the oxidation of myo-inositol (MI) to 2-keto-myo-inositol (2KMI or 2-inosose). This is Inositol 2-dehydrogenase 2 from Paenarthrobacter aurescens (strain TC1).